The chain runs to 197 residues: Small ribosomal subunit protein eS1 (197 aa).

Belongs to the eukaryotic ribosomal protein eS1 family.

This is Small ribosomal subunit protein eS1 from Sulfolobus acidocaldarius (strain ATCC 33909 / DSM 639 / JCM 8929 / NBRC 15157 / NCIMB 11770).